Reading from the N-terminus, the 189-residue chain is Apolipoprotein D (189 aa).

A signal peptide spans 1–20; that stretch reads MVTMLMFLATLAGLFTTAKG. Glutamine 21 is modified (pyrrolidone carboxylic acid). Intrachain disulfides connect cysteine 28–cysteine 134 and cysteine 61–cysteine 185. 2 N-linked (GlcNAc...) asparagine glycosylation sites follow: asparagine 65 and asparagine 98.

The protein belongs to the calycin superfamily. Lipocalin family. As to quaternary structure, homodimer. As to expression, highest levels of expression in brain, testis, virgin mammary gland and salivary gland. Moderate levels in skeletal muscle, lactating mammary gland and thymus. Low levels in lung and lymph node. No expression in kidney, pancreas, liver or spleen.

It localises to the secreted. APOD occurs in the macromolecular complex with lecithin-transport and binding of bilin. Appears to be able to transport a variety of ligands in a number of different contexts. The polypeptide is Apolipoprotein D (Apod) (Mus musculus (Mouse)).